Reading from the N-terminus, the 256-residue chain is MLEFYGKRFESRLLLGTAQYPSPSILADAVRASLSRIVTVSLRRESGEARAGQDFWALIKALGVAVLPNTAGCHTPREAITTAHMAREVFGTNWIKLEVIGDTDTLQPDPFGLVEAARILCDESFEVFPYMNDDLIVAERLIEAGCKVLMPWGAPIGSGRGLNNPYALKTMRAHFPDIPLVVDAGIGVPSHAAAAMELGFDAVLINTAVAKAGDPAAMARAFALAVEAGRLAYEADPIEARDMASPSTPLLGKAFL.

Lys-96 functions as the Schiff-base intermediate with DXP in the catalytic mechanism. 1-deoxy-D-xylulose 5-phosphate contacts are provided by residues Gly-157, Ala-184 to Gly-185, and Asn-206 to Thr-207.

The protein belongs to the ThiG family. In terms of assembly, homotetramer. Forms heterodimers with either ThiH or ThiS.

It localises to the cytoplasm. The catalysed reaction is [ThiS sulfur-carrier protein]-C-terminal-Gly-aminoethanethioate + 2-iminoacetate + 1-deoxy-D-xylulose 5-phosphate = [ThiS sulfur-carrier protein]-C-terminal Gly-Gly + 2-[(2R,5Z)-2-carboxy-4-methylthiazol-5(2H)-ylidene]ethyl phosphate + 2 H2O + H(+). It functions in the pathway cofactor biosynthesis; thiamine diphosphate biosynthesis. In terms of biological role, catalyzes the rearrangement of 1-deoxy-D-xylulose 5-phosphate (DXP) to produce the thiazole phosphate moiety of thiamine. Sulfur is provided by the thiocarboxylate moiety of the carrier protein ThiS. In vitro, sulfur can be provided by H(2)S. This chain is Thiazole synthase, found in Brucella canis (strain ATCC 23365 / NCTC 10854 / RM-666).